The following is a 1205-amino-acid chain: Centrosome and spindle pole associated protein 1 (1205 aa).

2 coiled-coil regions span residues 12 to 34 (QKAK…EMKG) and 87 to 108 (KLKE…TQAK). The interval 16–37 (LAKDKAELESDPPYMEMKGKAS) is disordered. The segment covering 158-173 (STEKVRQVEKNIEPKS) has biased composition (basic and acidic residues). 3 disordered regions span residues 158-187 (STEK…KSDL), 222-277 (SRRP…PGVS), and 380-467 (QQKK…GSTL). Positions 176–187 (NKNPISQGKSDL) are enriched in polar residues. Basic and acidic residues-rich tracts occupy residues 222 to 233 (SRRPLKQTKEEV) and 257 to 275 (ANGE…RDPG). A coiled-coil region spans residues 357 to 391 (EDRELTKRRKEKYRQELLEQIAEQQKKKRREKDLA). Basic and acidic residues-rich tracts occupy residues 401-410 (DPEKSPDRLK) and 417-428 (RHFEEMPPERPR). The residue at position 405 (Ser-405) is a Phosphoserine. Residues 433 to 447 (TPPPPFSAPSSPSVP) show a composition bias toward pro residues. Residues 574 to 618 (STQSLQSYQEALQEQIREREARRKKERLEKEEYEAKLEAEMRIYN) adopt a coiled-coil conformation. The segment at 677–704 (AENLEDSANKNSGPLQTQSSPFARGNTF) is disordered. Residues 685 to 697 (NKNSGPLQTQSSP) are compositionally biased toward polar residues. Positions 724–813 (RFQIEEKRQR…EKHNLQLQHY (90 aa)) form a coiled coil. A phosphoserine mark is found at Ser-850 and Ser-869. Residues 862-881 (SSMSRAQSPPVPARKNQLRA) form a disordered region. Positions 874 to 911 (ARKNQLRAEEEKKNVIMELSEMRKQLRSEERRLQGRLL) form a coiled coil. Ser-915 bears the Phosphoserine mark. Residues 993-1014 (QQQALLREQQKRLNRIKMRRDA) adopt a coiled-coil conformation. 3 disordered regions span residues 1086–1105 (GLDF…SLKS), 1124–1169 (RLTE…RPGT), and 1182–1205 (NEEQ…AAHA). Basic and acidic residues predominate over residues 1124–1134 (RLTEQQKKPTN). Over residues 1135-1145 (TDDEGSLVDPD) the composition is skewed to acidic residues. Positions 1146–1156 (DIMRHLSDDGR) are enriched in basic and acidic residues.

As to quaternary structure, interacts with PLEKHG6. Interacts with ARMC9, TOGARAM1, CCDC66, CEP104 and CEP290. In terms of processing, phosphorylated. Phosphorylation increases in colcemide-treated cells.

Its subcellular location is the cytoplasm. The protein localises to the cytoskeleton. It localises to the microtubule organizing center. The protein resides in the centrosome. It is found in the spindle. Its subcellular location is the spindle pole. The protein localises to the cell projection. It localises to the cilium. Its function is as follows. May play a role in cell-cycle-dependent microtubule organization. This chain is Centrosome and spindle pole associated protein 1 (Cspp1), found in Mus musculus (Mouse).